A 756-amino-acid chain; its full sequence is 1,4-alpha-glucan branching enzyme GlgB (756 aa).

Asp-425 serves as the catalytic Nucleophile. The active-site Proton donor is the Glu-478.

It belongs to the glycosyl hydrolase 13 family. GlgB subfamily. As to quaternary structure, monomer.

The catalysed reaction is Transfers a segment of a (1-&gt;4)-alpha-D-glucan chain to a primary hydroxy group in a similar glucan chain.. It functions in the pathway glycan biosynthesis; glycogen biosynthesis. Catalyzes the formation of the alpha-1,6-glucosidic linkages in glycogen by scission of a 1,4-alpha-linked oligosaccharide from growing alpha-1,4-glucan chains and the subsequent attachment of the oligosaccharide to the alpha-1,6 position. The chain is 1,4-alpha-glucan branching enzyme GlgB from Cupriavidus necator (strain ATCC 17699 / DSM 428 / KCTC 22496 / NCIMB 10442 / H16 / Stanier 337) (Ralstonia eutropha).